The primary structure comprises 268 residues: Movement protein (268 aa).

A disordered region spans residues 218-246 (SDVRKGKISSSDRSAPNKNYRNVKDFGGM). The segment covering 225 to 237 (ISSSDRSAPNKNY) has biased composition (polar residues).

It belongs to the tobamovirus movement protein family. As to quaternary structure, binds to host RBCS at the plasmodesmata; this interaction seems required for viral systemic movement. In resistant plants, interacts with host MBP2C at host microtubules; this interaction prevents virus cell to cell movement. In resistant plants, interacts with host resistance (R) protein (e.g. tomato ToMV resistance protein TM-2(2), AC Q71BG9) at the host plasma membrane; this interaction triggers host defense responses leading to programmed cell death.

It is found in the host cytoplasm. It localises to the host cytoskeleton. The protein resides in the host cell junction. The protein localises to the host plasmodesma. Transports viral genome to neighboring plant cells directly through plasmosdesmata, without any budding. The movement protein allows efficient cell to cell propagation, by bypassing the host cell wall barrier. Forms a ribonucleoprotein complex with viral RNA. Binds microtubules and modulates microtubule stability. Can bind double-stranded DNA. Triggers host hypersensitive defense reaction in incompatible plants harboring resistance (R) proteins. In Nicotiana tabacum (Common tobacco), this protein is Movement protein (MP).